The chain runs to 164 residues: uncharacterized protein (164 aa).

This is an uncharacterized protein from Mycobacterium tuberculosis (strain CDC 1551 / Oshkosh).